The sequence spans 534 residues: Serine/threonine-protein kinase Nek6 (534 aa).

Positions 4–257 (YEVVEQIGRG…AGELLRHPYL (254 aa)) constitute a Protein kinase domain. ATP contacts are provided by residues 10–18 (IGRGAYGSA) and K33. The active-site Proton acceptor is the D129. 2 disordered regions span residues 278–306 (KSNLGDKQQSRKPGSGRKRIIKTNGSSEA) and 425–449 (KAHTHQGSKPGTGDVPIVTEESSPK).

The protein belongs to the protein kinase superfamily. NEK Ser/Thr protein kinase family. NIMA subfamily. As to quaternary structure, interacts with DIS1. Ubiquitinated by the E3 ligase DIS1. Ubiquitination of NEK6 leads to its degradation via the 26S proteasome-dependent pathway. In terms of tissue distribution, expressed in anthers, pistils and leaves.

The protein resides in the cytoplasm. The enzyme catalyses L-seryl-[protein] + ATP = O-phospho-L-seryl-[protein] + ADP + H(+). It carries out the reaction L-threonyl-[protein] + ATP = O-phospho-L-threonyl-[protein] + ADP + H(+). In terms of biological role, may be involved in plant development processes. The protein is Serine/threonine-protein kinase Nek6 of Oryza sativa subsp. japonica (Rice).